The chain runs to 82 residues: Small ribosomal subunit protein bS18 (82 aa).

Belongs to the bacterial ribosomal protein bS18 family. In terms of assembly, part of the 30S ribosomal subunit. Forms a tight heterodimer with protein bS6.

Binds as a heterodimer with protein bS6 to the central domain of the 16S rRNA, where it helps stabilize the platform of the 30S subunit. The protein is Small ribosomal subunit protein bS18 of Bifidobacterium adolescentis (strain ATCC 15703 / DSM 20083 / NCTC 11814 / E194a).